We begin with the raw amino-acid sequence, 400 residues long: Elongation factor Tu-B (400 aa).

In terms of domain architecture, tr-type G spans 10 to 209 (KPHVNVGTIG…VVDEYIPTPE (200 aa)). Residues 19-26 (GHVDHGKT) form a G1 region. 19-26 (GHVDHGKT) is a GTP binding site. Thr26 contributes to the Mg(2+) binding site. A G2 region spans residues 60–64 (GITIN). The segment at 81–84 (DCPG) is G3. Residues 81-85 (DCPGH) and 136-139 (NKAD) contribute to the GTP site. Residues 136 to 139 (NKAD) form a G4 region. The interval 174-176 (SAL) is G5.

Belongs to the TRAFAC class translation factor GTPase superfamily. Classic translation factor GTPase family. EF-Tu/EF-1A subfamily. In terms of assembly, monomer.

It is found in the cytoplasm. The enzyme catalyses GTP + H2O = GDP + phosphate + H(+). Its function is as follows. GTP hydrolase that promotes the GTP-dependent binding of aminoacyl-tRNA to the A-site of ribosomes during protein biosynthesis. In Caldanaerobacter subterraneus subsp. tengcongensis (strain DSM 15242 / JCM 11007 / NBRC 100824 / MB4) (Thermoanaerobacter tengcongensis), this protein is Elongation factor Tu-B.